The following is a 32-amino-acid chain: U21-ctenitoxin-Co1a (32 aa).

3 disulfides stabilise this stretch: Cys-3-Cys-17, Cys-10-Cys-21, and Cys-16-Cys-30.

As to expression, expressed by the venom gland.

The protein resides in the secreted. Functionally, not toxic to mice by intracerebroventricular injection. The chain is U21-ctenitoxin-Co1a from Ctenus ornatus (Brazilian spider).